The chain runs to 351 residues: UPF0421 protein BC_2748 (351 aa).

The next 4 helical transmembrane spans lie at 19–39, 74–94, 109–129, and 131–151; these read IAVF…IFAV, FTFF…FTIV, TLTA…AFLI, and LATT…IFPP.

It belongs to the UPF0421 family.

The protein resides in the cell membrane. The sequence is that of UPF0421 protein BC_2748 from Bacillus cereus (strain ATCC 14579 / DSM 31 / CCUG 7414 / JCM 2152 / NBRC 15305 / NCIMB 9373 / NCTC 2599 / NRRL B-3711).